The chain runs to 552 residues: Probable malate:quinone oxidoreductase (552 aa).

The tract at residues 530–552 is disordered; the sequence is DAKPATPEAKPAQASSPQHDMAL. Positions 542–552 are enriched in polar residues; the sequence is QASSPQHDMAL.

This sequence belongs to the MQO family. The cofactor is FAD.

The enzyme catalyses (S)-malate + a quinone = a quinol + oxaloacetate. It participates in carbohydrate metabolism; tricarboxylic acid cycle; oxaloacetate from (S)-malate (quinone route): step 1/1. The chain is Probable malate:quinone oxidoreductase from Cronobacter sakazakii (strain ATCC BAA-894) (Enterobacter sakazakii).